The primary structure comprises 739 residues: Poly(A) polymerase alpha (739 aa).

A compositionally biased stretch (low complexity) spans 1-17; that stretch reads MPFPVTTQGSQQTQPPQ. The tract at residues 1 to 22 is disordered; that stretch reads MPFPVTTQGSQQTQPPQRHYGI. Phosphoserine occurs at positions 10 and 24. ATP contacts are provided by residues 100–102, Thr-109, 113–115, Asp-167, Lys-228, Tyr-237, and 246–247; these read FGS, DID, and GV. Mg(2+) contacts are provided by Asp-113, Asp-115, and Asp-167. Glycyl lysine isopeptide (Lys-Gly) (interchain with G-Cter in SUMO) cross-links involve residues Lys-444, Lys-445, Lys-506, and Lys-507. The short motif at 490–507 is the Nuclear localization signal 1 element; it reads RKQLHQLLPSHVLQKRKK. Positions 508–643 are ser/Thr-rich; the sequence is HSTEGVKLTA…TKVPNPIVGV (136 aa). The segment covering 523–534 has biased composition (low complexity); it reads LDLSMDSDNSMS. Positions 523 to 725 are disordered; sequence LDLSMDSDNS…SDIPALPANP (203 aa). Polar residues predominate over residues 535–557; sequence VPSPTSAMKTSPLNSSGSSQGRN. Ser-537 carries the post-translational modification Phosphoserine; by MAPK. Ser-558 is subject to Phosphoserine. Residues 566-582 are compositionally biased toward polar residues; that stretch reads ASVTSIQASEVSVPQAN. Low complexity-rich tracts occupy residues 583–594 and 611–622; these read SSESPGGPSSES and TVSRVVSSTRLV. An N6-acetyllysine mark is found at Lys-635 and Lys-644. The short motif at 644-659 is the Nuclear localization signal 2 element; that stretch reads KRTSSPNKEESPKKTK. Composition is skewed to basic and acidic residues over residues 650–660 and 676–686; these read NKEESPKKTKT and GHDKTETKEQV. Residues 671-739 form a required for interaction with NUDT21 region; it reads CLALSGHDKT…KNSIKLRLNR (69 aa). Over residues 691–715 the composition is skewed to polar residues; it reads SAVQSETVPASASLLASQKTSSTDL. Lys-730 carries the post-translational modification N6-acetyllysine; alternate. Lys-730 is covalently cross-linked (Glycyl lysine isopeptide (Lys-Gly) (interchain with G-Cter in SUMO); alternate). At Ser-732 the chain carries Phosphoserine. Residue Lys-734 is modified to N6-acetyllysine; alternate. Lys-734 is covalently cross-linked (Glycyl lysine isopeptide (Lys-Gly) (interchain with G-Cter in SUMO); alternate).

Belongs to the poly(A) polymerase family. As to quaternary structure, monomer. Found in a complex with CPSF1, FIP1L1 and PAPOLA. Interacts with AHCYL1 and FIP1L1; the interaction with AHCYL1 seems to increase interaction with FIP1L1. Interacts with NUDT21; the interaction is diminished by acetylation. Interacts with KPNB1; the interaction promotes PAP nuclear import and is inhibited by acetylation of PAP. It depends on Mg(2+) as a cofactor. Mn(2+) serves as cofactor. Post-translationally, polysumoylated. Varying sumoylation depending on tissue- and cell-type. Highly sumoylated in bladder and NIH 3T3 cells. Sumoylation is required for nuclear localization and enhances PAP stability. Desumoylated by SENP1. Inhibits polymerase activity. In terms of processing, hyperphosphorylation on multiple CDK2 consensus and non-consensus sites in the C-terminal Ser/Thr-rich region represses PAP activity in late M-phase. Phosphorylation/dephosphorylation may regulate the interaction between PAP and CPSF. Acetylated in the C-terminus. Acetylation decreases interaction with NUDT21 and KPNB1, and inhibits nuclear localization through inhibiting binding to the importin alpha/beta complex. In terms of tissue distribution, expressed in brain, thymus, lung, kidney, bladder, testis and spleen.

It localises to the nucleus. The catalysed reaction is RNA(n) + ATP = RNA(n)-3'-adenine ribonucleotide + diphosphate. Its function is as follows. Polymerase that creates the 3'-poly(A) tail of mRNA's. Also required for the endoribonucleolytic cleavage reaction at some polyadenylation sites. May acquire specificity through interaction with a cleavage and polyadenylation specificity factor (CPSF) at its C-terminus. This chain is Poly(A) polymerase alpha (Papola), found in Mus musculus (Mouse).